The following is a 218-amino-acid chain: ATP-dependent dethiobiotin synthetase BioD (218 aa).

Thr9 to Thr15 serves as a coordination point for ATP. Thr14 contacts Mg(2+). Lys35 is an active-site residue. Residue Lys35 participates in phosphate binding. Thr39 is a binding site for substrate. ATP is bound by residues Asp50, Glu116, and Glu116–Gly119. Mg(2+) is bound by residues Asp50 and Glu116. Glu116–Gly119 is a binding site for phosphate. Gly151–Asn154 contributes to the substrate binding site. ATP-binding positions include Asn175 and Asn175–Lys177.

The protein belongs to the dethiobiotin synthetase family. As to quaternary structure, homodimer. Requires Mg(2+) as cofactor.

The protein resides in the cytoplasm. The enzyme catalyses (7R,8S)-7,8-diammoniononanoate + CO2 + ATP = (4R,5S)-dethiobiotin + ADP + phosphate + 3 H(+). The protein operates within cofactor biosynthesis; biotin biosynthesis; biotin from 7,8-diaminononanoate: step 1/2. Its function is as follows. Catalyzes a mechanistically unusual reaction, the ATP-dependent insertion of CO2 between the N7 and N8 nitrogen atoms of 7,8-diaminopelargonic acid (DAPA, also called 7,8-diammoniononanoate) to form a ureido ring. The chain is ATP-dependent dethiobiotin synthetase BioD from Helicobacter pylori (strain ATCC 700392 / 26695) (Campylobacter pylori).